The chain runs to 526 residues: Major facilitator superfamily domain-containing protein 4A (526 aa).

12 helical membrane-spanning segments follow: residues 21 to 41 (LTYWSVFFSFGLCVAFLGPTI), 55 to 75 (ITLVFFSQQFFLFLGSTIGGF), 84 to 104 (LSSLAVSTLIISVVFAIIPLC), 107 to 127 (LLMLAFAMAVSGLAMGTIDTI), 142 to 162 (VFLQALHFFVGLGALVSPLIA), 215 to 235 (YAFWIMAIINLPVPIAIFVLV), 297 to 317 (LSFFGIHVLGGLVLFFSDGIV), 341 to 361 (GYLTCIFWAAITTGRLSAIPL), 377 to 397 (GVIVTVLLLLIFSNSSVFLFI), 401 to 421 (CLGLFISSIFPCMLALTEDIL), 430 to 450 (VLVTSAGMGEMVLQVLVGSVM), and 458 to 478 (FLLCGMIFGCLGFTFFTFLYF).

It belongs to the major facilitator superfamily.

The protein localises to the membrane. This is Major facilitator superfamily domain-containing protein 4A (mfsd4a) from Danio rerio (Zebrafish).